The primary structure comprises 53 residues: Metallocarboxypeptidase inhibitor b (53 aa).

3 disulfides stabilise this stretch: Cys9–Cys23, Cys15–Cys51, and Cys27–Cys38. Ala53 serves as a coordination point for Zn(2+).

Its function is as follows. Metallocarboxypeptidase inhibitor. Has an inhibitory effect on bovine CPA1 and porcine CPB1. Does not inhibit D.melanogaster svr (carboxypeptidase D). Shows no activity against serine proteases subtilisin or bovine trypsin, cysteine protease papain, and aspartyl protease porcine pepsin. In Nerita versicolor (Four-tooth nerite), this protein is Metallocarboxypeptidase inhibitor b.